A 506-amino-acid chain; its full sequence is Pisatin demethylase (506 aa).

Heme is bound at residue Cys-453.

Belongs to the cytochrome P450 family. The cofactor is heme.

Can detoxify the phytoalexin pisatin from garden pea. Pisatin is an antimicrobial compound produced by pea in response to infection by plant pathogens. The chain is Pisatin demethylase (PDA6-1) from Fusarium vanettenii (Neocosmospora pisi).